The chain runs to 290 residues: tRNA (adenine(58)-N(1))-methyltransferase catalytic subunit TRMT61A (290 aa).

The residue at position 2 (serine 2) is an N-acetylserine. Substrate stretches follow at residues 20–22 (LGH), 35–42 (QTQTRHGV), 64–65 (GW), 85–89 (QILYS), and 110–117 (SGTGSGSV). S-adenosyl-L-methionine-binding positions include leucine 87, 114–116 (SGS), glutamate 135, arginine 140, 163–164 (DV), and aspartate 181. Substrate regions lie at residues 180–183 (LDIP) and 205–212 (SFSPCIEQ). Phosphoserine is present on serine 264. Threonine 279 serves as a coordination point for substrate.

The protein belongs to the class I-like SAM-binding methyltransferase superfamily. TRM61 family. As to quaternary structure, heterotetramer; composed of two copies of TRMT6 and two copies of TRMT61A.

It localises to the nucleus. The enzyme catalyses adenosine(58) in tRNA + S-adenosyl-L-methionine = N(1)-methyladenosine(58) in tRNA + S-adenosyl-L-homocysteine + H(+). It catalyses the reaction an adenosine in mRNA + S-adenosyl-L-methionine = an N(1)-methyladenosine in mRNA + S-adenosyl-L-homocysteine + H(+). In terms of biological role, catalytic subunit of tRNA (adenine-N(1)-)-methyltransferase, which catalyzes the formation of N(1)-methyladenine at position 58 (m1A58) in initiator methionyl-tRNA. Catalytic subunit of mRNA N(1)-methyltransferase complex, which mediates methylation of adenosine residues at the N(1) position of a small subset of mRNAs: N(1) methylation takes place in tRNA T-loop-like structures of mRNAs and is only present at low stoichiometries. The sequence is that of tRNA (adenine(58)-N(1))-methyltransferase catalytic subunit TRMT61A (Trmt61a) from Mus musculus (Mouse).